Here is a 303-residue protein sequence, read N- to C-terminus: UDP-3-O-acyl-N-acetylglucosamine deacetylase (303 aa).

Positions 78, 237, and 241 each coordinate Zn(2+). Residue His-264 is the Proton donor of the active site.

It belongs to the LpxC family. It depends on Zn(2+) as a cofactor.

It carries out the reaction a UDP-3-O-[(3R)-3-hydroxyacyl]-N-acetyl-alpha-D-glucosamine + H2O = a UDP-3-O-[(3R)-3-hydroxyacyl]-alpha-D-glucosamine + acetate. It functions in the pathway glycolipid biosynthesis; lipid IV(A) biosynthesis; lipid IV(A) from (3R)-3-hydroxytetradecanoyl-[acyl-carrier-protein] and UDP-N-acetyl-alpha-D-glucosamine: step 2/6. Functionally, catalyzes the hydrolysis of UDP-3-O-myristoyl-N-acetylglucosamine to form UDP-3-O-myristoylglucosamine and acetate, the committed step in lipid A biosynthesis. The protein is UDP-3-O-acyl-N-acetylglucosamine deacetylase of Pseudomonas putida (strain GB-1).